The primary structure comprises 238 residues: NADH-quinone oxidoreductase subunit C (238 aa).

The disordered stretch occupies residues 1–20; sequence MSSPDQNPSDAAGQTGSSNE.

Belongs to the complex I 30 kDa subunit family. As to quaternary structure, NDH-1 is composed of 14 different subunits. Subunits NuoB, C, D, E, F, and G constitute the peripheral sector of the complex.

It is found in the cell membrane. It catalyses the reaction a quinone + NADH + 5 H(+)(in) = a quinol + NAD(+) + 4 H(+)(out). Functionally, NDH-1 shuttles electrons from NADH, via FMN and iron-sulfur (Fe-S) centers, to quinones in the respiratory chain. The immediate electron acceptor for the enzyme in this species is believed to be a menaquinone. Couples the redox reaction to proton translocation (for every two electrons transferred, four hydrogen ions are translocated across the cytoplasmic membrane), and thus conserves the redox energy in a proton gradient. The sequence is that of NADH-quinone oxidoreductase subunit C from Mycobacterium ulcerans (strain Agy99).